The primary structure comprises 147 residues: Large ribosomal subunit protein mL40 (147 aa).

The N-terminal 26 residues, M1 to N26, are a transit peptide targeting the mitochondrion.

Belongs to the mitochondrion-specific ribosomal protein mL40 family. As to quaternary structure, component of the mitochondrial large ribosomal subunit (mt-LSU). Mature yeast 74S mitochondrial ribosomes consist of a small (37S) and a large (54S) subunit. The 37S small subunit contains a 15S ribosomal RNA (15S mt-rRNA) and 34 different proteins. The 54S large subunit contains a 21S rRNA (21S mt-rRNA) and 46 different proteins.

The protein resides in the mitochondrion. Its function is as follows. Component of the mitochondrial ribosome (mitoribosome), a dedicated translation machinery responsible for the synthesis of mitochondrial genome-encoded proteins, including at least some of the essential transmembrane subunits of the mitochondrial respiratory chain. The mitoribosomes are attached to the mitochondrial inner membrane and translation products are cotranslationally integrated into the membrane. This Saccharomyces cerevisiae (strain ATCC 204508 / S288c) (Baker's yeast) protein is Large ribosomal subunit protein mL40 (MRPL28).